Consider the following 756-residue polypeptide: Catalase-peroxidase (756 aa).

The tryptophyl-tyrosyl-methioninium (Trp-Tyr) (with M-270) cross-link spans 91–244 (WHSAGTYRTG…LAAVQMGLIY (154 aa)). The Proton acceptor role is filled by histidine 92. The disordered stretch occupies residues 198-230 (AQKKMQQPGDGTLVAEPENHANEESRTASGERN). Basic and acidic residues predominate over residues 214 to 223 (PENHANEESR). Residues 244-270 (YVNPEGPEGVPDPVASARDIRETFGRM) constitute a cross-link (tryptophyl-tyrosyl-methioninium (Tyr-Met) (with W-91)). Histidine 285 lines the heme b pocket.

The protein belongs to the peroxidase family. Peroxidase/catalase subfamily. Homodimer or homotetramer. It depends on heme b as a cofactor. In terms of processing, formation of the three residue Trp-Tyr-Met cross-link is important for the catalase, but not the peroxidase activity of the enzyme.

The catalysed reaction is H2O2 + AH2 = A + 2 H2O. It catalyses the reaction 2 H2O2 = O2 + 2 H2O. In terms of biological role, bifunctional enzyme with both catalase and broad-spectrum peroxidase activity. This is Catalase-peroxidase from Pseudomonas syringae pv. syringae (strain B728a).